A 370-amino-acid polypeptide reads, in one-letter code: Dual-specificity RNA methyltransferase RlmN (370 aa).

The Proton acceptor role is filled by Glu-93. Positions 99 to 337 (EEGRGTLCVS…VTTVRKTRGD (239 aa)) constitute a Radical SAM core domain. Cys-106 and Cys-343 are disulfide-bonded. Positions 113, 117, and 120 each coordinate [4Fe-4S] cluster. Residues 167–168 (GE), Ser-199, 221–223 (SLH), and Asn-300 each bind S-adenosyl-L-methionine. Cys-343 serves as the catalytic S-methylcysteine intermediate.

Belongs to the radical SAM superfamily. RlmN family. It depends on [4Fe-4S] cluster as a cofactor.

It localises to the cytoplasm. The catalysed reaction is adenosine(2503) in 23S rRNA + 2 reduced [2Fe-2S]-[ferredoxin] + 2 S-adenosyl-L-methionine = 2-methyladenosine(2503) in 23S rRNA + 5'-deoxyadenosine + L-methionine + 2 oxidized [2Fe-2S]-[ferredoxin] + S-adenosyl-L-homocysteine. It catalyses the reaction adenosine(37) in tRNA + 2 reduced [2Fe-2S]-[ferredoxin] + 2 S-adenosyl-L-methionine = 2-methyladenosine(37) in tRNA + 5'-deoxyadenosine + L-methionine + 2 oxidized [2Fe-2S]-[ferredoxin] + S-adenosyl-L-homocysteine. In terms of biological role, specifically methylates position 2 of adenine 2503 in 23S rRNA and position 2 of adenine 37 in tRNAs. m2A2503 modification seems to play a crucial role in the proofreading step occurring at the peptidyl transferase center and thus would serve to optimize ribosomal fidelity. This is Dual-specificity RNA methyltransferase RlmN from Francisella tularensis subsp. tularensis (strain WY96-3418).